The chain runs to 336 residues: Octanoyltransferase (336 aa).

Residues 1–16 (MPKSALMSSSFQTSVS) are compositionally biased toward polar residues. 2 disordered regions span residues 1–22 (MPKSALMSSSFQTSVSPRPLPV) and 48–88 (QGKG…GGGR). The segment at 1–92 (MPKSALMSSS…AAGGGRTIRD (92 aa)) is unknown. Positions 93 to 336 (VKEAAFDVLD…GQEALSVASP (244 aa)) are lipB domain. The region spanning 124–318 (VGGRPTLLLV…AFALTFADYD (195 aa)) is the BPL/LPL catalytic domain. Substrate-binding positions include 170 to 177 (RGGDVTYH), 244 to 246 (SIG), and 257 to 259 (GIG). Cys275 serves as the catalytic Acyl-thioester intermediate.

It in the C-terminal section; belongs to the LipB family.

The protein localises to the cytoplasm. It catalyses the reaction octanoyl-[ACP] + L-lysyl-[protein] = N(6)-octanoyl-L-lysyl-[protein] + holo-[ACP] + H(+). Its pathway is protein modification; protein lipoylation via endogenous pathway; protein N(6)-(lipoyl)lysine from octanoyl-[acyl-carrier-protein]: step 1/2. In terms of biological role, catalyzes the transfer of endogenously produced octanoic acid from octanoyl-acyl-carrier-protein onto the lipoyl domains of lipoate-dependent enzymes. Lipoyl-ACP can also act as a substrate although octanoyl-ACP is likely to be the physiological substrate. The polypeptide is Octanoyltransferase (Deinococcus radiodurans (strain ATCC 13939 / DSM 20539 / JCM 16871 / CCUG 27074 / LMG 4051 / NBRC 15346 / NCIMB 9279 / VKM B-1422 / R1)).